The sequence spans 227 residues: Uridylate kinase (227 aa).

Residue 7–11 (KISGK) participates in ATP binding. Position 44 (G44) interacts with UMP. Residues G45 and R49 each contribute to the ATP site. Residues D66 and 114 to 120 (FQPGQST) contribute to the UMP site. Positions 140, 141, 146, and 149 each coordinate ATP.

Belongs to the UMP kinase family. As to quaternary structure, homohexamer.

Its subcellular location is the cytoplasm. The enzyme catalyses UMP + ATP = UDP + ADP. Its pathway is pyrimidine metabolism; CTP biosynthesis via de novo pathway; UDP from UMP (UMPK route): step 1/1. Unlike most bacteria, is not activated by GTP. UTP acts as a competitive inhibitor against both substrates. High concentration of UMP abolishes the inhibition of UTP at low ATP concentrations, indicating that UTP binds to the acceptor site (UMP site). In terms of biological role, catalyzes the reversible phosphorylation of UMP to UDP, with ATP as the most efficient phosphate donor. Is also able to phosphorylate dUMP, although much less efficiently. The sequence is that of Uridylate kinase (pyrH) from Saccharolobus solfataricus (strain ATCC 35092 / DSM 1617 / JCM 11322 / P2) (Sulfolobus solfataricus).